The primary structure comprises 270 residues: Dehydrodolichyl diphosphate synthase (270 aa).

The protein belongs to the UPP synthase family.

Its subcellular location is the endoplasmic reticulum membrane. It functions in the pathway protein modification; protein glycosylation. In terms of biological role, cis-prenyl transferase that adds multiple copies of isopentenyl pyrophosphate (IPP) to farnesyl pyrophosphate (FPP) to produce dehydrodolichyl diphosphate (Dedol-PP). In Encephalitozoon cuniculi (strain GB-M1) (Microsporidian parasite), this protein is Dehydrodolichyl diphosphate synthase (RER2).